The primary structure comprises 310 residues: Probable cell division protein WhiA (310 aa).

Residues 277–310 (SLKELAEQVPDGPISKSGVNHRLKKLHEIAENLR) constitute a DNA-binding region (H-T-H motif).

Belongs to the WhiA family.

In terms of biological role, involved in cell division and chromosome segregation. The sequence is that of Probable cell division protein WhiA from Lactobacillus delbrueckii subsp. bulgaricus (strain ATCC BAA-365 / Lb-18).